Reading from the N-terminus, the 549-residue chain is Probable protein kinase UbiB (549 aa).

The Protein kinase domain maps to 123 to 501; it reads DFNETPLASA…QQQAHKSNYL (379 aa). ATP is bound by residues 129 to 137 and K152; that span reads LASASISQV. The active-site Proton acceptor is D287. The next 2 helical transmembrane spans lie at 498-518 and 520-540; these read SNYL…LFNQ and ATLW…IIGW.

This sequence belongs to the ABC1 family. UbiB subfamily.

It localises to the cell inner membrane. The protein operates within cofactor biosynthesis; ubiquinone biosynthesis [regulation]. In terms of biological role, is probably a protein kinase regulator of UbiI activity which is involved in aerobic coenzyme Q (ubiquinone) biosynthesis. In Shewanella sp. (strain MR-7), this protein is Probable protein kinase UbiB.